The chain runs to 163 residues: Transcription elongation factor GreB (163 aa).

This sequence belongs to the GreA/GreB family. GreB subfamily.

Functionally, necessary for efficient RNA polymerase transcription elongation past template-encoded arresting sites. The arresting sites in DNA have the property of trapping a certain fraction of elongating RNA polymerases that pass through, resulting in locked ternary complexes. Cleavage of the nascent transcript by cleavage factors such as GreA or GreB allows the resumption of elongation from the new 3'terminus. GreB releases sequences of up to 9 nucleotides in length. In Vibrio parahaemolyticus serotype O3:K6 (strain RIMD 2210633), this protein is Transcription elongation factor GreB.